The primary structure comprises 293 residues: Probable E3 ubiquitin-protein ligase RNF144A-A (293 aa).

Positions 16-237 (PLVSCKLCLG…YDKGPCRNKL (222 aa)) are TRIAD supradomain. Residues C20, C23, C43, C46, C111, C116, C135, C138, C143, C146, H151, C156, C186, and C189 each contribute to the Zn(2+) site. The RING-type 1 zinc finger occupies 20 to 70 (CKLCLGEFPLEQMTTITQCQCVFCTMCLKQYVELLIKEGFETAISCPDSAC). An IBR-type zinc finger spans residues 91-156 (QRYRKLQFEK…KASWHPDQDC (66 aa)). The RING-type 2; atypical zinc-finger motif lies at 186 to 215 (CPKCKVYIERDEGCAQMMCKNCKHAFCWYC). C199 is an active-site residue. Zn(2+) is bound by residues C204, C207, C212, C215, H227, and C233. A helical transmembrane segment spans residues 251–271 (VVGIFAGFGLLLLVASPFLLL).

Belongs to the RBR family. RNF144 subfamily.

It is found in the membrane. The enzyme catalyses [E2 ubiquitin-conjugating enzyme]-S-ubiquitinyl-L-cysteine + [acceptor protein]-L-lysine = [E2 ubiquitin-conjugating enzyme]-L-cysteine + [acceptor protein]-N(6)-ubiquitinyl-L-lysine.. It functions in the pathway protein modification; protein ubiquitination. Functionally, E3 ubiquitin-protein ligase which accepts ubiquitin from E2 ubiquitin-conjugating enzymes ube2l3 and ube2l6 in the form of a thioester and then directly transfers the ubiquitin to targeted substrates. The chain is Probable E3 ubiquitin-protein ligase RNF144A-A (rnf144aa) from Danio rerio (Zebrafish).